The chain runs to 301 residues: Probable alpha-L-glutamate ligase (301 aa).

The ATP-grasp domain maps to 104–287 (LQLLSRKGIG…VADMIFEFIE (184 aa)). ATP contacts are provided by residues Lys141, 178-179 (EF), Asp187, and 211-213 (RSN). Residues Asp248, Glu260, and Asn262 each coordinate Mg(2+). Mn(2+)-binding residues include Asp248, Glu260, and Asn262.

This sequence belongs to the RimK family. Requires Mg(2+) as cofactor. Mn(2+) serves as cofactor.

This is Probable alpha-L-glutamate ligase from Vibrio atlanticus (strain LGP32) (Vibrio splendidus (strain Mel32)).